Reading from the N-terminus, the 430-residue chain is Dolichyl-diphosphooligosaccharide--protein glycosyltransferase subunit WBP1 (430 aa).

The N-terminal stretch at 1–20 is a signal peptide; the sequence is MRTDWNFFFCILLQAIFVVG. The Lumenal portion of the chain corresponds to 24–393; it reads SRTLVLYDQS…PRSWEISNSW (370 aa). N-linked (GlcNAc...) asparagine glycans are attached at residues Asn60 and Asn332. A helical transmembrane segment spans residues 394–414; sequence VYISAICGVIVAWIFFVVSFV. At 415–430 the chain is on the cytoplasmic side; sequence TTSSVGKKLETFKKTN.

Belongs to the DDOST 48 kDa subunit family. As to quaternary structure, component of the oligosaccharyltransferase (OST) complex, which appears to exist in two assemblies comprising OST1, OST2, OST4, OST5, STT3, SWP1, WPB1, and either OST3 or OST6. OST assembly occurs through the formation of 3 subcomplexes. Subcomplex 1 contains OST1 and OST5, subcomplex 2 contains STT3, OST3, and OST4, and subcomplex 3 contains OST2, WBP1, and SWP1. Interacts with SEC61, SBH1 and SSS1.

The protein resides in the endoplasmic reticulum membrane. It functions in the pathway protein modification; protein glycosylation. Its function is as follows. Subunit of the oligosaccharyl transferase (OST) complex that catalyzes the initial transfer of a defined glycan (Glc(3)Man(9)GlcNAc(2) in eukaryotes) from the lipid carrier dolichol-pyrophosphate to an asparagine residue within an Asn-X-Ser/Thr consensus motif in nascent polypeptide chains, the first step in protein N-glycosylation. N-glycosylation occurs cotranslationally and the complex associates with the Sec61 complex at the channel-forming translocon complex that mediates protein translocation across the endoplasmic reticulum (ER). All subunits are required for a maximal enzyme activity. This is Dolichyl-diphosphooligosaccharide--protein glycosyltransferase subunit WBP1 (WBP1) from Saccharomyces cerevisiae (strain ATCC 204508 / S288c) (Baker's yeast).